The following is a 474-amino-acid chain: Dihydrolipoyl dehydrogenase (474 aa).

Residues 36–44 (EAKDMGGTC), Lys-53, and Gly-119 contribute to the FAD site. The cysteines at positions 44 and 49 are disulfide-linked. Residues 184 to 188 (GSGYI), Glu-207, and 275 to 278 (ATGR) each bind NAD(+). Residues Asp-323 and Ala-331 each coordinate FAD. The active-site Proton acceptor is the His-459.

Belongs to the class-I pyridine nucleotide-disulfide oxidoreductase family. Homodimer. FAD serves as cofactor.

The protein localises to the cell inner membrane. It catalyses the reaction N(6)-[(R)-dihydrolipoyl]-L-lysyl-[protein] + NAD(+) = N(6)-[(R)-lipoyl]-L-lysyl-[protein] + NADH + H(+). Lipoamide dehydrogenase is a component of the alpha-ketoacid dehydrogenase complexes. This is Dihydrolipoyl dehydrogenase (lpdA) from Synechocystis sp. (strain ATCC 27184 / PCC 6803 / Kazusa).